We begin with the raw amino-acid sequence, 940 residues long: Gamma-aminobutyric acid type B receptor subunit 2 (940 aa).

The signal sequence occupies residues 1–40; sequence MASPPSSGQPRPPPPPPPPARLLLPLLLSLLLSLAPGAWG. The Extracellular portion of the chain corresponds to 41 to 482; that stretch reads WARGAPRPPP…LRKISLPLYS (442 aa). N-linked (GlcNAc...) asparagine glycosylation occurs at Asn-89. Disulfide bonds link Cys-107/Cys-134, Cys-236/Cys-265, and Cys-264/Cys-301. 4 N-linked (GlcNAc...) asparagine glycosylation sites follow: Asn-297, Asn-388, Asn-403, and Asn-452. Residues 483 to 503 form a helical membrane-spanning segment; it reads ILSALTILGMIMASAFLFFNI. The Cytoplasmic segment spans residues 504-521; the sequence is KNRNQKLIKMSSPYMNNL. A helical transmembrane segment spans residues 522-542; sequence IILGGMLSYASIFLFGLDGSF. Over 543-550 the chain is Extracellular; that stretch reads VSEKTFET. The chain crosses the membrane as a helical span at residues 551–571; that stretch reads LCTVRTWILTVGYTTAFGAMF. The Cytoplasmic segment spans residues 572–596; sequence AKTWRVHAIFKNVKMKKKIIKDQKL. Residues 597–617 traverse the membrane as a helical segment; the sequence is LVIVGGMLLIDLCILICWQAV. Residues 618-653 lie on the Extracellular side of the membrane; sequence DPLRRTVERYSMEPDPAGRDISIRPLLEHCENTHMT. The helical transmembrane segment at 654–674 threads the bilayer; the sequence is IWLGIVYAYKGLLMLFGCFLA. The Cytoplasmic portion of the chain corresponds to 675-690; sequence WETRNVSIPALNDSKY. A helical transmembrane segment spans residues 691-711; that stretch reads IGMSVYNVGIMCIIGAAVSFL. Topologically, residues 712–719 are extracellular; that stretch reads TRDQPNVQ. Residues 720–740 traverse the membrane as a helical segment; the sequence is FCIVALVIIFCSTITLCLVFV. The Cytoplasmic segment spans residues 741 to 940; sequence PKLITLRTNP…PSFRVMVSGL (200 aa). The interval 762-789 is disordered; it reads TQNQKKEDSKTSTSVTSVNQASTSRLEG. Over residues 772-786 the composition is skewed to polar residues; that stretch reads TSTSVTSVNQASTSR. Phosphoserine is present on residues Ser-775 and Ser-778. A coiled-coil region spans residues 781 to 818; sequence QASTSRLEGLQSENHRLRMKITELDKDLEEVTMQLQDT. Thr-818 bears the Phosphothreonine mark. 6 positions are modified to phosphoserine: Ser-883, Ser-892, Ser-912, Ser-915, Ser-919, and Ser-923.

It belongs to the G-protein coupled receptor 3 family. GABA-B receptor subfamily. Heterodimer of GABBR1 and GABBR2. Homodimers may form, but are inactive. Interacts (via C-terminus) with ATF4 (via leucine zipper domain).

The protein resides in the cell membrane. Its subcellular location is the postsynaptic cell membrane. Its function is as follows. Component of a heterodimeric G-protein coupled receptor for GABA, formed by GABBR1 and GABBR2. Within the heterodimeric GABA receptor, only GABBR1 seems to bind agonists, while GABBR2 mediates coupling to G proteins. Ligand binding causes a conformation change that triggers signaling via guanine nucleotide-binding proteins (G proteins) and modulates the activity of down-stream effectors, such as adenylate cyclase. Signaling inhibits adenylate cyclase, stimulates phospholipase A2, activates potassium channels, inactivates voltage-dependent calcium-channels and modulates inositol phospholipid hydrolysis. Plays a critical role in the fine-tuning of inhibitory synaptic transmission. Pre-synaptic GABA receptor inhibits neurotransmitter release by down-regulating high-voltage activated calcium channels, whereas postsynaptic GABA receptor decreases neuronal excitability by activating a prominent inwardly rectifying potassium (Kir) conductance that underlies the late inhibitory postsynaptic potentials. Not only implicated in synaptic inhibition but also in hippocampal long-term potentiation, slow wave sleep, muscle relaxation and antinociception. Interacts with KCTD8, KCTD12 and KCTD16; this interaction determines the pharmacology and kinetics of the receptor response, the KCTD proteins markedly accelerating the GABA-B response, although to different extents. The protein is Gamma-aminobutyric acid type B receptor subunit 2 (Gabbr2) of Mus musculus (Mouse).